The following is an 88-amino-acid chain: uncharacterized protein (88 aa).

Positions 1-88 (MPHLPELSKQ…IRRGNPSGVA (88 aa)) are disordered. The span at 21–65 (YRAKGEDLENSHHNNESRLAEGVHYDRNKAPALQEREKASTEKVN) shows a compositional bias: basic and acidic residues.

Functionally, involved in osmoadaptation. This is an uncharacterized protein from Emericella nidulans (strain FGSC A4 / ATCC 38163 / CBS 112.46 / NRRL 194 / M139) (Aspergillus nidulans).